We begin with the raw amino-acid sequence, 1239 residues long: Anion exchange protein 2 (1239 aa).

A disordered region spans residues 1-237 (MSSAPRRPAK…HRSYNLQERR (237 aa)). At 1–706 (MSSAPRRPAK…DFRDALDPQC (706 aa)) the chain is on the cytoplasmic side. Basic and acidic residues-rich tracts occupy residues 37 to 49 (ELHRTLGVERFEE) and 58 to 75 (GGEEPGRSYGEEDFEYHR). Composition is skewed to basic residues over residues 76–85 (QSSHHIHHPL) and 94–110 (RRRKTPQGPGRKPRRRP). S113, S132, S144, S170, and S172 each carry phosphoserine. Positions 120–133 (TIEEGEEDEDEASE) are enriched in acidic residues. The span at 141 to 155 (TQPSPVSTPSSVQFF) shows a compositional bias: low complexity. Over residues 189–207 (GAQAGTQVEEAEAVAVASG) the composition is skewed to low complexity. A compositionally biased stretch (gly residues) spans 208–217 (TAGGDDGGAS). S241 carries the phosphoserine modification. T255 is modified (phosphothreonine). The residue at position 272 (K272) is an N6-methyllysine. A disordered region spans residues 285-318 (HLVRKNAKGSTQSGREGREPGPTPRARPRAPHKP). A Phosphoserine modification is found at S441. Residues 447–468 (SLLGHHHGQGAESDPHVTEPLI) are disordered. Membrane (anion exchange) stretches follow at residues 706–1239 (CLAA…PMPV) and 708–1239 (AAVI…PMPV). The next 4 helical transmembrane spans lie at 707 to 727 (LAAVIFIYFAALSPAITFGGL), 752 to 772 (FCLLGAQPLLVIGFSGPLLVF), 794 to 814 (IGFWLVLLALLMVALEGSFLV), and 824 to 844 (IFAFLISLIFIYETFYKLVKI). Residues 845–895 (FQEHPLHGCSASNSSEVDGGENMTWAVARPTLGPGNRSLAGQSGQGKPRGQ) lie on the Extracellular side of the membrane. Residues N857, N866, and N880 are each glycosylated (N-linked (GlcNAc...) asparagine). A helical transmembrane segment spans residues 896-916 (PNTALLSLVLMAGTFFIAFFL). Residues 917-931 (RKFKNSRFFPGRIRR) are Cytoplasmic-facing. 5 helical membrane passes run 932 to 952 (VIGDFGVPIAILIMVLVDYSI), 987 to 1007 (FPVWMMVASLLPAILVFILIF), 1034 to 1054 (LLLIVAMGGICALFGLPWLAA), 1088 to 1108 (RVTGLLVALLVGLSIVIGDLL), and 1111 to 1131 (IPLAVLFGIFLYMGVTSLNGI). Residue C1171 is the site of S-palmitoyl cysteine attachment. The helical transmembrane segment at 1172–1192 (LALLWAVMSTAASLAFPFILI) threads the bilayer.

It belongs to the anion exchanger (TC 2.A.31) family.

The protein resides in the apical cell membrane. It localises to the basolateral cell membrane. It catalyses the reaction hydrogencarbonate(in) + chloride(out) = hydrogencarbonate(out) + chloride(in). Its function is as follows. Sodium-independent anion exchanger which mediates the electroneutral exchange of chloride for bicarbonate ions across the cell membrane. Plays an important role in osteoclast differentiation and function. Regulates bone resorption and calpain-dependent actin cytoskeleton organization in osteoclasts via anion exchange-dependent control of pH. Essential for intracellular pH regulation in CD8(+) T-cells upon CD3 stimulation, modulating CD8(+) T-cell response. The chain is Anion exchange protein 2 (SLC4A2) from Pongo abelii (Sumatran orangutan).